The chain runs to 450 residues: Phosphoglucosamine mutase (450 aa).

Ser-102 serves as the catalytic Phosphoserine intermediate. Ser-102, Asp-243, Asp-245, and Asp-247 together coordinate Mg(2+). Ser-102 carries the phosphoserine modification.

It belongs to the phosphohexose mutase family. Mg(2+) is required as a cofactor. Activated by phosphorylation.

The catalysed reaction is alpha-D-glucosamine 1-phosphate = D-glucosamine 6-phosphate. Its function is as follows. Catalyzes the conversion of glucosamine-6-phosphate to glucosamine-1-phosphate. In Rhizobium leguminosarum bv. trifolii (strain WSM2304), this protein is Phosphoglucosamine mutase.